Here is a 183-residue protein sequence, read N- to C-terminus: Capsid protein (183 aa).

Residues 136 to 183 form a disordered region; sequence NAPILSTLPETTVVRRRGRSPRRRTPSPRRRRSQSPRRRRSQSRESQC. The span at 149 to 176 shows a compositional bias: basic residues; the sequence is VRRRGRSPRRRTPSPRRRRSQSPRRRRS. Phosphoserine; by host occurs at positions 155, 162, and 170. Residues 155-161 form a 1; half-length repeat; sequence SPRRRTP. Positions 155–177 are 3 X 8 AA repeats of S-P-R-R-R-[PR]-S-Q; the sequence is SPRRRTPSPRRRRSQSPRRRRSQ. The Bipartite nuclear localization signal motif lies at 158–175; that stretch reads RRTPSPRRRRSQSPRRRR. A run of 2 repeats spans residues 162 to 169 and 170 to 177. The interval 177 to 183 is RNA binding; it reads QSRESQC.

This sequence belongs to the orthohepadnavirus core antigen family. In terms of assembly, homodimerizes, then multimerizes. Interacts with cytosol exposed regions of viral L glycoprotein present in the reticulum-to-Golgi compartment. Interacts with human FLNB. Phosphorylated form interacts with host importin alpha; this interaction depends on the exposure of the NLS, which itself depends upon genome maturation and/or phosphorylation of the capsid protein. Interacts with host NUP153. Phosphorylated by host SRPK1, SRPK2, and maybe protein kinase C or GAPDH. Phosphorylation is critical for pregenomic RNA packaging. Protein kinase C phosphorylation is stimulated by HBx protein and may play a role in transport of the viral genome to the nucleus at the late step during the viral replication cycle.

It localises to the virion. The protein localises to the host cytoplasm. Its function is as follows. Self assembles to form an icosahedral capsid. Most capsids appear to be large particles with an icosahedral symmetry of T=4 and consist of 240 copies of capsid protein, though a fraction forms smaller T=3 particles consisting of 180 capsid proteins. Entering capsids are transported along microtubules to the nucleus. Phosphorylation of the capsid is thought to induce exposure of nuclear localization signal in the C-terminal portion of the capsid protein that allows binding to the nuclear pore complex via the importin (karyopherin-) alpha and beta. Capsids are imported in intact form through the nuclear pore into the nuclear basket, where it probably binds NUP153. Only capsids that contain the mature viral genome can release the viral DNA and capsid protein into the nucleoplasm. Immature capsids get stuck in the basket. Capsids encapsulate the pre-genomic RNA and the P protein. Pre-genomic RNA is reverse-transcribed into DNA while the capsid is still in the cytoplasm. The capsid can then either be directed to the nucleus, providing more genomes for transcription, or bud through the endoplasmic reticulum to provide new virions. In Hepatitis B virus genotype B2 (isolate Indonesia/pIDW420/1988) (HBV-B), this protein is Capsid protein.